A 187-amino-acid chain; its full sequence is UPF0301 protein plu1183 (187 aa).

Belongs to the UPF0301 (AlgH) family.

This Photorhabdus laumondii subsp. laumondii (strain DSM 15139 / CIP 105565 / TT01) (Photorhabdus luminescens subsp. laumondii) protein is UPF0301 protein plu1183.